Here is a 502-residue protein sequence, read N- to C-terminus: Cytochrome c-552 (502 aa).

An N-terminal signal peptide occupies residues 1 to 25 (MKYLTKSRVIATIAMLGCLSVSAWA). His105 contacts heme c. Heme is bound by residues Cys133, Cys136, and Lys137. The heme c site is built by Cys171, Cys174, His175, Cys220, Cys223, and His224. Ca(2+) contacts are provided by Glu226, Tyr227, Lys271, and Gln273. Tyr227 is a binding site for substrate. His274 is a binding site for substrate. 9 residues coordinate heme c: His285, Cys292, Cys295, His296, His311, Cys324, Cys327, His328, and His403. Residues 481–502 (RERGLLPEVTPKSVTTPKVDAK) are disordered.

This sequence belongs to the cytochrome c-552 family. It depends on Ca(2+) as a cofactor. Heme c is required as a cofactor.

Its subcellular location is the periplasm. It carries out the reaction 6 Fe(III)-[cytochrome c] + NH4(+) + 2 H2O = 6 Fe(II)-[cytochrome c] + nitrite + 8 H(+). It participates in nitrogen metabolism; nitrate reduction (assimilation). Its function is as follows. Catalyzes the reduction of nitrite to ammonia, consuming six electrons in the process. This Haemophilus ducreyi (strain 35000HP / ATCC 700724) protein is Cytochrome c-552.